A 96-amino-acid chain; its full sequence is uncharacterized protein (96 aa).

Functionally, essential for virus function. This is an uncharacterized protein from Saccharolobus solfataricus (Sulfolobus solfataricus).